Reading from the N-terminus, the 648-residue chain is Transcriptional regulator ManR (648 aa).

PRD domains are found at residues 187-292 (KFLH…YPLQ) and 297-404 (LENA…MQGS). Residues H222, H281, H334, and H393 each carry the phosphohistidine; by HPr modification. A PTS EIIB type-2 domain is found at 409–500 (KKAVIVCHMG…FIRQLGESHR (92 aa)). C415 is modified (phosphocysteine; by EIIA). Residues 510–648 (NNTTPFLVFL…VMTFLSHLDY (139 aa)) enclose the PTS EIIA type-2 domain. At H570 the chain carries Phosphohistidine; by EIIB.

It belongs to the transcriptional antiterminator BglG family.

It carries out the reaction D-mannose(out) + N(pros)-phospho-L-histidyl-[protein] = D-mannose 6-phosphate(in) + L-histidyl-[protein]. With respect to regulation, the regulatory activity of ManR is modulated by phosphorylation and dephosphorylation of the various ManR domains. It becomes activated via phosphoryl group transfer from PEP, EI and HPr on the two conserved histidine residues in the PRD 2 domain, whereas phosphorylation of the EIIA-like domain on His-570 by the PTS EIIB-Man domain of ManP inactivates ManR. In terms of biological role, positively regulates the expression of the mannose operon that consists of three genes, manP, manA, and yjdF, which are responsible for the transport and utilization of mannose. Also activates its own expression. This Bacillus subtilis (strain 168) protein is Transcriptional regulator ManR (manR).